We begin with the raw amino-acid sequence, 215 residues long: [PSI+] inducibility protein 3 (215 aa).

S2 bears the N-acetylserine mark. Phosphoserine occurs at positions 52 and 55. Residues 54 to 113 (ASLEYVEALYQFDPQQDGDLGLKPGDKVQLLEKLSPEWYKGSCNGRTGIFPANYVKPAFS) form the SH3 domain. Residue K80 forms a Glycyl lysine isopeptide (Lys-Gly) (interchain with G-Cter in ubiquitin) linkage. Residues 114-189 (GSNGPSNLPP…HQSSHSHLKS (76 aa)) form a disordered region. Positions 124-127 (PPQY) match the PY motif motif.

It belongs to the LSB1 family. Interacts with LAS17, RSP5 and SUP35. Post-translationally, ubiquitinated by RSP5. Ubiquitination reduces the protein abundance and its prion-inducing ability.

It is found in the cytoplasm. Its subcellular location is the nucleus. It localises to the cytoskeleton. The protein localises to the actin patch. Its function is as follows. Overproduction promotes the de novo induction of the [PSI+] prion form of SUP35. The prion-inducing effect depends on the association with the actin cytoskeleton. Also implicated in prion maintenance during heat stress. In Saccharomyces cerevisiae (strain ATCC 204508 / S288c) (Baker's yeast), this protein is [PSI+] inducibility protein 3 (PIN3).